The sequence spans 265 residues: Deoxyribose-phosphate aldolase 2 (265 aa).

Asp-108 functions as the Proton donor/acceptor in the catalytic mechanism. Residue Lys-173 is the Schiff-base intermediate with acetaldehyde of the active site. The active-site Proton donor/acceptor is the Lys-207.

The protein belongs to the DeoC/FbaB aldolase family. DeoC type 2 subfamily.

The protein resides in the cytoplasm. It carries out the reaction 2-deoxy-D-ribose 5-phosphate = D-glyceraldehyde 3-phosphate + acetaldehyde. The protein operates within carbohydrate degradation; 2-deoxy-D-ribose 1-phosphate degradation; D-glyceraldehyde 3-phosphate and acetaldehyde from 2-deoxy-alpha-D-ribose 1-phosphate: step 2/2. Functionally, catalyzes a reversible aldol reaction between acetaldehyde and D-glyceraldehyde 3-phosphate to generate 2-deoxy-D-ribose 5-phosphate. The polypeptide is Deoxyribose-phosphate aldolase 2 (deoC2) (Yersinia pestis).